Consider the following 463-residue polypeptide: ATP synthase subunit beta (463 aa).

Position 152–159 (152–159) interacts with ATP; it reads GGAGVGKT.

It belongs to the ATPase alpha/beta chains family. As to quaternary structure, F-type ATPases have 2 components, CF(1) - the catalytic core - and CF(0) - the membrane proton channel. CF(1) has five subunits: alpha(3), beta(3), gamma(1), delta(1), epsilon(1). CF(0) has three main subunits: a(1), b(2) and c(9-12). The alpha and beta chains form an alternating ring which encloses part of the gamma chain. CF(1) is attached to CF(0) by a central stalk formed by the gamma and epsilon chains, while a peripheral stalk is formed by the delta and b chains.

Its subcellular location is the cell inner membrane. The catalysed reaction is ATP + H2O + 4 H(+)(in) = ADP + phosphate + 5 H(+)(out). In terms of biological role, produces ATP from ADP in the presence of a proton gradient across the membrane. The catalytic sites are hosted primarily by the beta subunits. In Shewanella oneidensis (strain ATCC 700550 / JCM 31522 / CIP 106686 / LMG 19005 / NCIMB 14063 / MR-1), this protein is ATP synthase subunit beta.